The primary structure comprises 308 residues: Protoheme IX farnesyltransferase (308 aa).

9 consecutive transmembrane segments (helical) span residues 20-40 (VLAY…VTAI), 53-73 (PLLI…ANTF), 102-122 (NALV…WWTT), 124-144 (LLSG…YTLL), 149-169 (TSQN…IGWS), 170-190 (AITD…FFWT), 227-249 (LIYT…WLYM), 254-276 (VAGA…GEPV), and 288-308 (YLAV…PTLF).

The protein belongs to the UbiA prenyltransferase family. Protoheme IX farnesyltransferase subfamily.

It localises to the cell membrane. The catalysed reaction is heme b + (2E,6E)-farnesyl diphosphate + H2O = Fe(II)-heme o + diphosphate. It participates in porphyrin-containing compound metabolism; heme O biosynthesis; heme O from protoheme: step 1/1. Converts heme B (protoheme IX) to heme O by substitution of the vinyl group on carbon 2 of heme B porphyrin ring with a hydroxyethyl farnesyl side group. This chain is Protoheme IX farnesyltransferase, found in Mycobacterium leprae (strain TN).